Here is a 108-residue protein sequence, read N- to C-terminus: Large ribosomal subunit protein uL11 (108 aa).

Belongs to the universal ribosomal protein uL11 family. In terms of assembly, part of the ribosomal stalk of the 50S ribosomal subunit. Interacts with L10 and the large rRNA to form the base of the stalk. L10 forms an elongated spine to which L12 dimers bind in a sequential fashion forming a multimeric L10(L12)X complex.

Forms part of the ribosomal stalk which helps the ribosome interact with GTP-bound translation factors. The protein is Large ribosomal subunit protein uL11 (rpl11) of Aeropyrum pernix (strain ATCC 700893 / DSM 11879 / JCM 9820 / NBRC 100138 / K1).